Consider the following 199-residue polypeptide: Thymidylate kinase (199 aa).

7-14 (GIDGSGKS) contacts ATP.

The protein belongs to the thymidylate kinase family.

It carries out the reaction dTMP + ATP = dTDP + ADP. Phosphorylation of dTMP to form dTDP in both de novo and salvage pathways of dTTP synthesis. The polypeptide is Thymidylate kinase (Thermosipho melanesiensis (strain DSM 12029 / CIP 104789 / BI429)).